The following is a 331-amino-acid chain: NADH-quinone oxidoreductase subunit H (331 aa).

A run of 9 helical transmembrane segments spans residues 6 to 26 (FFIV…ATLA), 45 to 65 (GPWM…IKLF), 78 to 98 (FIFL…MSVI), 120 to 140 (IGIL…LIGG), 167 to 187 (GLSL…DIVH), 193 to 213 (ITSW…IAAF), 241 to 261 (MRWG…SIVI), 263 to 283 (LIFL…MIFL), and 311 to 331 (CWKI…FVII).

This sequence belongs to the complex I subunit 1 family. As to quaternary structure, NDH-1 is composed of 14 different subunits. Subunits NuoA, H, J, K, L, M, N constitute the membrane sector of the complex.

The protein resides in the cell inner membrane. The enzyme catalyses a quinone + NADH + 5 H(+)(in) = a quinol + NAD(+) + 4 H(+)(out). In terms of biological role, NDH-1 shuttles electrons from NADH, via FMN and iron-sulfur (Fe-S) centers, to quinones in the respiratory chain. The immediate electron acceptor for the enzyme in this species is believed to be ubiquinone. Couples the redox reaction to proton translocation (for every two electrons transferred, four hydrogen ions are translocated across the cytoplasmic membrane), and thus conserves the redox energy in a proton gradient. This subunit may bind ubiquinone. The polypeptide is NADH-quinone oxidoreductase subunit H (Campylobacter hominis (strain ATCC BAA-381 / DSM 21671 / CCUG 45161 / LMG 19568 / NCTC 13146 / CH001A)).